The primary structure comprises 253 residues: Phosphoadenosine 5'-phosphosulfate reductase (253 aa).

The Nucleophile; cysteine thiosulfonate intermediate role is filled by C239.

This sequence belongs to the PAPS reductase family. CysH subfamily.

Its subcellular location is the cytoplasm. The enzyme catalyses [thioredoxin]-disulfide + sulfite + adenosine 3',5'-bisphosphate + 2 H(+) = [thioredoxin]-dithiol + 3'-phosphoadenylyl sulfate. The protein operates within sulfur metabolism; hydrogen sulfide biosynthesis; sulfite from sulfate: step 3/3. Its function is as follows. Catalyzes the formation of sulfite from phosphoadenosine 5'-phosphosulfate (PAPS) using thioredoxin as an electron donor. This chain is Phosphoadenosine 5'-phosphosulfate reductase, found in Aliivibrio fischeri (strain MJ11) (Vibrio fischeri).